Consider the following 832-residue polypeptide: MLMSDVEKFGGDCGSSGGSGRPTLKLGTRASTLAKTPTSTGGRTFMTVEVRSRKRKASGASPAEGVGYGTSPYTSDDNRQGQISRSATCSLTAREQLSRINAIHTADSISAQKEAAKKLRDEEEVEVAPPEGESVIDEPDSVKEPAAAADAVADVATPVLGDIAPGAAGTRPGRGGHDDKGKRYSYQGAGGKIKEKEGGGGVKKAAASRASSKHIKLDIENALSGTEERYVLMASSRRRGGSKSDRRISRDVVIPDEIEVKALAAAMAEKVGDVLRVLSHMGVEARQNTAIGSDVASEVAERFSHRPKVVSKIQMERELSDISDSGLALEPRPPVVTVMGHVDHGKTSLLDVLRKSNVAEKEFRGITQHIGAYQIDVDGKKITFLDTPGHEAFSDMRARGTNVTDIVVLVVAADDGVMPQTVESINHVKTAGVSMVVAVNKIDRSDANVDKITNDLLQHGVVPEKLGGDVMIVPVSAKTGENLDKLKSSILLLAEMLELRAPVEGRAQGVVIESKIERNCGVVATVIVQRGTLRKGNVVVAGDGSYGKVRNMFDDSDNSVEEALPSMPVRVLGLDKVPKAGDVFLVMPSEKHARDLLEHRAGINLSRGRDSGRNDSVFTGPLFSMDRPEGVNMILKADVAGSLEAISRSVAQIEHEEVKFNILHKDIGDVTKSDILLAEAASAVVLAFNVKVDAQARDLVRQKDVDIRHHRVIYDLIDDVKGVVCGKLKPIIREVQVGLLVVREVFSSGKGGTVIGCYVSEGAVSRGALVKIYRNDAVTCEGKVKVLRRFKDDVKEVGHGLECGVLVEGAKDVAVGDVIKVLEVVEHARVVE.

Basic and acidic residues predominate over residues 1-10; sequence MLMSDVEKFG. 3 disordered regions span residues 1 to 87, 120 to 148, and 163 to 201; these read MLMS…SRSA, RDEE…PAAA, and IAPG…GGGG. Gly residues predominate over residues 11–20; sequence GDCGSSGGSG. Composition is skewed to polar residues over residues 29–42 and 71–87; these read RAST…STGG and SPYT…SRSA. A tr-type G domain is found at 331-500; sequence PRPPVVTVMG…LLLAEMLELR (170 aa). Residues 340–347 are G1; it reads GHVDHGKT. 340 to 347 lines the GTP pocket; that stretch reads GHVDHGKT. The tract at residues 365–369 is G2; that stretch reads GITQH. The segment at 386–389 is G3; the sequence is DTPG. Residues 386–390 and 440–443 each bind GTP; these read DTPGH and NKID. The tract at residues 440–443 is G4; it reads NKID. A G5 region spans residues 476–478; it reads SAK.

The protein belongs to the TRAFAC class translation factor GTPase superfamily. Classic translation factor GTPase family. IF-2 subfamily.

The protein resides in the cytoplasm. In terms of biological role, one of the essential components for the initiation of protein synthesis. Protects formylmethionyl-tRNA from spontaneous hydrolysis and promotes its binding to the 30S ribosomal subunits. Also involved in the hydrolysis of GTP during the formation of the 70S ribosomal complex. This Anaplasma marginale (strain St. Maries) protein is Translation initiation factor IF-2.